The following is a 256-amino-acid chain: UPF0246 protein Swoo_1284 (256 aa).

It belongs to the UPF0246 family.

The polypeptide is UPF0246 protein Swoo_1284 (Shewanella woodyi (strain ATCC 51908 / MS32)).